The chain runs to 125 residues: Somatostatin-2 (125 aa).

The first 24 residues, 1-24 (MQCIRCPAILALLALVLCGPSVSS), serve as a signal peptide directing secretion. Gln-25 is subject to Pyrrolidone carboxylic acid. The propeptide occupies 25 to 97 (QLDREQSDNQ…ATGGRMNLER (73 aa)). The tract at residues 82–107 (AEDASMATGGRMNLERSVDSTNNLPP) is disordered. Cys-114 and Cys-125 are disulfide-bonded. Lys-120 carries the 5-hydroxylysine modification.

The protein belongs to the somatostatin family.

The protein resides in the secreted. In terms of biological role, somatostatin inhibits the release of somatotropin. This chain is Somatostatin-2 (sst2), found in Lophius americanus (American angler).